The sequence spans 408 residues: Serine/threonine transporter SstT (408 aa).

9 helical membrane passes run 11–31, 43–63, 82–102, 141–161, 192–212, 216–236, 290–310, 316–336, and 363–383; these read LANG…VSLA, FLGS…VFIL, IVVL…LLSM, ALMT…GLAL, IGIF…AIAG, LLAV…PLIV, IPLG…VLTL, LGIQ…AISA, and VAMQ…AAET.

Belongs to the dicarboxylate/amino acid:cation symporter (DAACS) (TC 2.A.23) family.

It localises to the cell inner membrane. The enzyme catalyses L-serine(in) + Na(+)(in) = L-serine(out) + Na(+)(out). It catalyses the reaction L-threonine(in) + Na(+)(in) = L-threonine(out) + Na(+)(out). In terms of biological role, involved in the import of serine and threonine into the cell, with the concomitant import of sodium (symport system). The chain is Serine/threonine transporter SstT from Shewanella sp. (strain MR-4).